The following is a 145-amino-acid chain: Hemoglobin subunit beta-2 (145 aa).

A Globin domain is found at H2–Y145. Residues H63 and H92 each contribute to the heme b site.

Belongs to the globin family. In terms of assembly, minor hemoglobin is a tetramer of two alpha-2 chains and two beta-2 chains. Red blood cells.

Its function is as follows. Involved in oxygen transport from the lung to the various peripheral tissues. The polypeptide is Hemoglobin subunit beta-2 (HBB2) (Triturus cristatus (Great crested newt)).